Reading from the N-terminus, the 888-residue chain is Microtubule-associated protein 10 (888 aa).

5 disordered regions span residues 398 to 454 (EHKG…VTKG), 508 to 602 (SLAA…TSLR), 620 to 642 (NILRGKWKKQVQSPGLSRQDPAV), 654 to 683 (QVKAASAADTNENRPPSRKSSCESTSELQC), and 699 to 836 (TENN…YEPS). Positions 524-541 (LTDSNGKVSSWAVQSQLP) are enriched in polar residues. The segment covering 572 to 589 (ESSRTREAKQSHAMKKET) has biased composition (basic and acidic residues). Residues 590–600 (VGQSENKTVTS) are compositionally biased toward polar residues. 5 stretches are compositionally biased toward polar residues: residues 661–683 (ADTNENRPPSRKSSCESTSELQC), 699–714 (TENNSRSLPAPDSSTG), 722–745 (SWASKSSEARLSTRKNSSESSSVF), 772–786 (EASSLSTSDFSSQWT), and 825–836 (ARTSQVSSYEPS).

In terms of assembly, interacts (via middle region) with microtubules.

It localises to the cytoplasm. It is found in the cytoskeleton. Its subcellular location is the spindle pole. The protein resides in the microtubule organizing center. The protein localises to the centrosome. It localises to the midbody. Functionally, microtubule-associated protein (MAP) that plays a role in the regulation of cell division; promotes microtubule stability and participates in the organization of the spindle midzone and normal progress of cytokinesis. This is Microtubule-associated protein 10 (Map10) from Rattus norvegicus (Rat).